The following is a 461-amino-acid chain: Kynurenine 3-monooxygenase (461 aa).

The next 2 membrane-spanning stretches (helical) occupy residues 395–415 (GFMNAIFPKSWIPLYSMVTFT) and 432–452 (ILSNLWKTTSTLALIGAAIGI).

This sequence belongs to the aromatic-ring hydroxylase family. KMO subfamily. The cofactor is FAD.

It is found in the mitochondrion. The protein resides in the membrane. The enzyme catalyses L-kynurenine + NADPH + O2 + H(+) = 3-hydroxy-L-kynurenine + NADP(+) + H2O. The protein operates within cofactor biosynthesis; NAD(+) biosynthesis; quinolinate from L-kynurenine: step 1/3. Its function is as follows. Catalyzes the hydroxylation of L-kynurenine (L-Kyn) to form 3-hydroxy-L-kynurenine (L-3OHKyn). Required for synthesis of quinolinic acid. In Caenorhabditis briggsae, this protein is Kynurenine 3-monooxygenase.